We begin with the raw amino-acid sequence, 337 residues long: Diacylglycerol O-acyltransferase 2-like protein 6 (337 aa).

Transmembrane regions (helical) follow at residues 22 to 42 (IPVY…LLLF) and 102 to 122 (YIIL…NFAT).

It belongs to the diacylglycerol acyltransferase family.

The protein resides in the endoplasmic reticulum membrane. It catalyses the reaction 1,2-di-(9Z-octadecenoyl)-sn-glycerol + (9Z)-octadecenoyl-CoA = 1,2,3-tri-(9Z-octadecenoyl)-glycerol + CoA. Diglyceride acyltransferase that uses fatty acyl-CoA as substrate. Particularly active with oleate as a substrate. Has no wax synthase activity to produce wax esters. The polypeptide is Diacylglycerol O-acyltransferase 2-like protein 6 (Dgat2l6) (Mus musculus (Mouse)).